A 29-amino-acid chain; its full sequence is Cytochrome b6-f complex subunit 8 (29 aa).

The helical transmembrane segment at isoleucine 3–valine 23 threads the bilayer.

This sequence belongs to the PetN family. The 4 large subunits of the cytochrome b6-f complex are cytochrome b6, subunit IV (17 kDa polypeptide, PetD), cytochrome f and the Rieske protein, while the 4 small subunits are PetG, PetL, PetM and PetN. The complex functions as a dimer.

The protein resides in the cellular thylakoid membrane. Component of the cytochrome b6-f complex, which mediates electron transfer between photosystem II (PSII) and photosystem I (PSI), cyclic electron flow around PSI, and state transitions. The polypeptide is Cytochrome b6-f complex subunit 8 (Mastigocladus laminosus (Fischerella sp.)).